Reading from the N-terminus, the 310-residue chain is Aspartate carbamoyltransferase catalytic subunit (310 aa).

Carbamoyl phosphate is bound by residues Arg55 and Thr56. L-aspartate is bound at residue Lys85. Arg106, His135, and Gln138 together coordinate carbamoyl phosphate. L-aspartate contacts are provided by Arg168 and Arg230. Carbamoyl phosphate contacts are provided by Leu268 and Pro269.

This sequence belongs to the aspartate/ornithine carbamoyltransferase superfamily. ATCase family. Heterododecamer (2C3:3R2) of six catalytic PyrB chains organized as two trimers (C3), and six regulatory PyrI chains organized as three dimers (R2).

It catalyses the reaction carbamoyl phosphate + L-aspartate = N-carbamoyl-L-aspartate + phosphate + H(+). It participates in pyrimidine metabolism; UMP biosynthesis via de novo pathway; (S)-dihydroorotate from bicarbonate: step 2/3. In terms of biological role, catalyzes the condensation of carbamoyl phosphate and aspartate to form carbamoyl aspartate and inorganic phosphate, the committed step in the de novo pyrimidine nucleotide biosynthesis pathway. The sequence is that of Aspartate carbamoyltransferase catalytic subunit from Buchnera aphidicola subsp. Acyrthosiphon pisum (strain APS) (Acyrthosiphon pisum symbiotic bacterium).